The chain runs to 171 residues: Endoribonuclease YbeY (171 aa).

Zn(2+) contacts are provided by His126, His130, and His136.

Belongs to the endoribonuclease YbeY family. The cofactor is Zn(2+).

It localises to the cytoplasm. Its function is as follows. Single strand-specific metallo-endoribonuclease involved in late-stage 70S ribosome quality control and in maturation of the 3' terminus of the 16S rRNA. The sequence is that of Endoribonuclease YbeY from Rhizobium johnstonii (strain DSM 114642 / LMG 32736 / 3841) (Rhizobium leguminosarum bv. viciae).